Consider the following 607-residue polypeptide: Siderophore iron transporter mirC (607 aa).

Helical transmembrane passes span leucine 67–methionine 89, valine 129–isoleucine 148, serine 186–glycine 208, tryptophan 223–leucine 245, isoleucine 279–asparagine 301, isoleucine 311–tryptophan 328, threonine 349–valine 368, glycine 388–lysine 410, valine 417–tyrosine 436, valine 446–valine 468, threonine 481–tryptophan 503, and leucine 557–leucine 574. Residues serine 584–serine 593 show a composition bias toward basic and acidic residues. Residues serine 584–threonine 607 form a disordered region.

Belongs to the major facilitator superfamily.

It is found in the membrane. In Emericella nidulans (strain FGSC A4 / ATCC 38163 / CBS 112.46 / NRRL 194 / M139) (Aspergillus nidulans), this protein is Siderophore iron transporter mirC (mirC).